The following is a 125-amino-acid chain: Flagellar protein FliT (125 aa).

The required for homodimerization stretch occupies residues methionine 1 to serine 50. The tract at residues leucine 60–glutamine 98 is fliD binding.

This sequence belongs to the FliT family. Homodimer. Interacts with FliD and FlhC.

It localises to the cytoplasm. It is found in the cytosol. Dual-function protein that regulates the transcription of class 2 flagellar operons and that also acts as an export chaperone for the filament-capping protein FliD. As a transcriptional regulator, acts as an anti-FlhDC factor; it directly binds FlhC, thus inhibiting the binding of the FlhC/FlhD complex to class 2 promoters, resulting in decreased expression of class 2 flagellar operons. As a chaperone, effects FliD transition to the membrane by preventing its premature polymerization, and by directing it to the export apparatus. This chain is Flagellar protein FliT, found in Photorhabdus laumondii subsp. laumondii (strain DSM 15139 / CIP 105565 / TT01) (Photorhabdus luminescens subsp. laumondii).